A 219-amino-acid chain; its full sequence is MIIEARNIRKSFGSLEVLKGVDIAIDRGEIVSIVGTSGAGKTTLLQILGTLDRADSGELRIDGTDIMGMNNRKQAEFRNRRLGFIFQFHRLLPEFTALENVMIPALIAGKSRKEASCEAERLLSDLNLSDRASHKPSELSGGEKQRIAVARALVNHPAIILADEPSGSLDSAHKEELHALFFRLCREMGQTFLIVTHDEKLAAGTDRILHMRDGLLFSE.

The ABC transporter domain occupies 3–219 (IEARNIRKSF…HMRDGLLFSE (217 aa)). 35-42 (GTSGAGKT) provides a ligand contact to ATP.

It belongs to the ABC transporter superfamily. Lipoprotein translocase (TC 3.A.1.125) family. The complex is composed of two ATP-binding proteins (LolD) and two transmembrane proteins (LolC and LolE).

The protein resides in the cell inner membrane. In terms of biological role, part of the ABC transporter complex LolCDE involved in the translocation of mature outer membrane-directed lipoproteins, from the inner membrane to the periplasmic chaperone, LolA. Responsible for the formation of the LolA-lipoprotein complex in an ATP-dependent manner. The polypeptide is Lipoprotein-releasing system ATP-binding protein LolD (Porphyromonas gingivalis (strain ATCC BAA-308 / W83)).